The sequence spans 515 residues: N-acetylglucosamine-1-phosphodiester alpha-N-acetylglucosaminidase (515 aa).

Positions 1–25 are cleaved as a signal peptide; the sequence is MATSTGRWLLLRLALFGFLWEASGG. Residues 26–49 constitute a propeptide, removed in mature form; the sequence is LDSGASRDDDLLLPYPRARARLPR. Over 50-448 the chain is Lumenal; the sequence is DCTRVRAGNR…AGELSFFTRT (399 aa). 5 disulfide bridges follow: Cys-115/Cys-148, Cys-132/Cys-323, Cys-307/Cys-314, Cys-362/Cys-373, and Cys-380/Cys-389. Residues Asn-208, Asn-214, and Asn-296 are each glycosylated (N-linked (GlcNAc...) asparagine). The 33-residue stretch at 358-390 folds into the EGF-like domain; that stretch reads DELDCGPSNCSQHGLCTETGCRCDAGWTGSNCS. Asn-366, Asn-388, and Asn-420 each carry an N-linked (GlcNAc...) asparagine glycan. The helical transmembrane segment at 449-469 threads the bilayer; that stretch reads AWLALTLALAFLLLISTAANL. Residues 470 to 515 are Cytoplasmic-facing; sequence SLLLSRAERNRRLHGDYAYHPLQEMNGEPLAAEKEQPGGAHNPFKD. Residues 486–493 form a mediates the interaction with AP4M1 region; sequence YAYHPLQE. The short motif at 488-491 is the Tyrosine-based internalization motif element; that stretch reads YHPL. An NPF internalization motif motif is present at residues 511–515; sequence NPFKD.

Homotetramer arranged as two disulfide-linked homodimers. Interacts with AP4M1. In terms of processing, the precursor is cleaved and activated in the trans-Golgi network by a furin endopeptidase. In terms of tissue distribution, isoform 2 may be brain-specific.

The protein localises to the golgi apparatus. Its subcellular location is the golgi stack membrane. It localises to the trans-Golgi network. The enzyme catalyses N(4)-[6-(N-acetyl-alpha-D-glucosaminyl-1-phospho)-alpha-D-mannosyl-(1-&gt;2)-alpha-D-mannosyl-(glycan)]-L-asparaginyl-[protein] + H2O = N(4)-[6-phospho-alpha-D-mannosyl-(1-&gt;2)-alpha-D-mannosyl-(glycan)]-L-asparaginyl-[protein] + N-acetyl-D-glucosamine + H(+). It functions in the pathway protein modification; protein glycosylation. In terms of biological role, catalyzes the second step in the formation of the mannose 6-phosphate targeting signal on lysosomal enzyme oligosaccharides by removing GlcNAc residues from GlcNAc-alpha-P-mannose moieties, which are formed in the first step. Also hydrolyzes UDP-GlcNAc, a sugar donor for Golgi N-acetylglucosaminyltransferases. This Homo sapiens (Human) protein is N-acetylglucosamine-1-phosphodiester alpha-N-acetylglucosaminidase (NAGPA).